Reading from the N-terminus, the 345-residue chain is S-adenosylmethionine:tRNA ribosyltransferase-isomerase (345 aa).

The protein belongs to the QueA family. Monomer.

The protein resides in the cytoplasm. It catalyses the reaction 7-aminomethyl-7-carbaguanosine(34) in tRNA + S-adenosyl-L-methionine = epoxyqueuosine(34) in tRNA + adenine + L-methionine + 2 H(+). It participates in tRNA modification; tRNA-queuosine biosynthesis. Transfers and isomerizes the ribose moiety from AdoMet to the 7-aminomethyl group of 7-deazaguanine (preQ1-tRNA) to give epoxyqueuosine (oQ-tRNA). The chain is S-adenosylmethionine:tRNA ribosyltransferase-isomerase from Lactococcus lactis subsp. lactis (strain IL1403) (Streptococcus lactis).